The sequence spans 146 residues: Basic phospholipase A2 beta-bungarotoxin A2 chain (146 aa).

The first 19 residues, 1–19, serve as a signal peptide directing secretion; that stretch reads MNPAHLLVLSAVCVSLLGA. Residues 20–27 constitute a propeptide that is removed on maturation; the sequence is SNIPPQSL. Disulfide bonds link cysteine 54–cysteine 145, cysteine 56–cysteine 72, cysteine 71–cysteine 126, cysteine 78–cysteine 119, cysteine 87–cysteine 112, and cysteine 105–cysteine 117. Residues tyrosine 55, glycine 57, and glycine 59 each contribute to the Ca(2+) site. The active site involves histidine 75. Aspartate 76 is a binding site for Ca(2+). Aspartate 120 is an active-site residue.

It belongs to the phospholipase A2 family. Group I subfamily. D49 sub-subfamily. Heterodimer; disulfide-linked. The A chain has phospholipase A2 activity and the B chain shows homology with the basic protease inhibitors. Requires Ca(2+) as cofactor. In terms of tissue distribution, expressed by the venom gland.

It is found in the secreted. It catalyses the reaction a 1,2-diacyl-sn-glycero-3-phosphocholine + H2O = a 1-acyl-sn-glycero-3-phosphocholine + a fatty acid + H(+). Snake venom phospholipase A2 (PLA2) that inhibits neuromuscular transmission by blocking acetylcholine release from the nerve termini. PLA2 catalyzes the calcium-dependent hydrolysis of the 2-acyl groups in 3-sn-phosphoglycerides. This is Basic phospholipase A2 beta-bungarotoxin A2 chain from Bungarus flaviceps flaviceps (Red-headed krait).